The primary structure comprises 272 residues: CD40 ligand (272 aa).

Over 1 to 23 (MNEAYSPAAPRPMGSTSPSTMKM) the chain is Cytoplasmic. A helical; Signal-anchor for type II membrane protein membrane pass occupies residues 24–44 (FMCFLSVFMVVQTIGTVLFCL). Topologically, residues 45–272 (YLHMKMDKME…GNTYFGMFKL (228 aa)) are extracellular. N-linked (GlcNAc...) asparagine glycosylation is found at Asn124 and Asn146. The THD domain maps to 136–272 (IATHLAGVKS…GNTYFGMFKL (137 aa)). A disulfide bridge connects residues Cys190 and Cys229. Asn251 carries an N-linked (GlcNAc...) asparagine glycan.

This sequence belongs to the tumor necrosis factor family. In terms of assembly, homotrimer. Interacts with CD28. CD40 ligand, soluble form: Exists as either a monomer or a homotrimer. Forms a ternary complex between CD40 and integrins for CD40-CD40LG signaling. Post-translationally, the soluble form derives from the membrane form by proteolytic processing.

It localises to the cell membrane. The protein localises to the cell surface. The protein resides in the secreted. Its function is as follows. Cytokine that acts as a ligand to CD40/TNFRSF5. Costimulates T-cell proliferation and cytokine production. Induces the activation of NF-kappa-B. Mediates B-cell proliferation in the absence of co-stimulus as well as IgE production in the presence of IL4. Involved in immunoglobulin class switching. Acts as a ligand for integrins, specifically ITGA5:ITGB1 and ITGAV:ITGB3; both integrins and the CD40 receptor are required for activation of CD40-CD40LG signaling, which have cell-type dependent effects, such as B-cell activation, NF-kappa-B signaling and anti-apoptotic signaling. This is CD40 ligand (CD40LG) from Gallus gallus (Chicken).